The primary structure comprises 273 residues: 3-methyl-2-oxobutanoate hydroxymethyltransferase (273 aa).

Mg(2+) contacts are provided by Asp49 and Asp88. 3-methyl-2-oxobutanoate-binding positions include Asp49–Ser50, Asp88, and Lys118. Mg(2+) is bound at residue Glu120. The Proton acceptor role is filled by Glu187.

This sequence belongs to the PanB family. In terms of assembly, homodecamer; pentamer of dimers. Requires Mg(2+) as cofactor.

The protein resides in the cytoplasm. It carries out the reaction 3-methyl-2-oxobutanoate + (6R)-5,10-methylene-5,6,7,8-tetrahydrofolate + H2O = 2-dehydropantoate + (6S)-5,6,7,8-tetrahydrofolate. It functions in the pathway cofactor biosynthesis; (R)-pantothenate biosynthesis; (R)-pantoate from 3-methyl-2-oxobutanoate: step 1/2. Its function is as follows. Catalyzes the reversible reaction in which hydroxymethyl group from 5,10-methylenetetrahydrofolate is transferred onto alpha-ketoisovalerate to form ketopantoate. The polypeptide is 3-methyl-2-oxobutanoate hydroxymethyltransferase (Rhizobium etli (strain ATCC 51251 / DSM 11541 / JCM 21823 / NBRC 15573 / CFN 42)).